A 269-amino-acid chain; its full sequence is Ribosomal RNA small subunit methyltransferase J (269 aa).

S-adenosyl-L-methionine-binding positions include 124–125 (ER) and Asp188.

This sequence belongs to the methyltransferase superfamily. RsmJ family.

The protein resides in the cytoplasm. The catalysed reaction is guanosine(1516) in 16S rRNA + S-adenosyl-L-methionine = N(2)-methylguanosine(1516) in 16S rRNA + S-adenosyl-L-homocysteine + H(+). Specifically methylates the guanosine in position 1516 of 16S rRNA. This Saccharophagus degradans (strain 2-40 / ATCC 43961 / DSM 17024) protein is Ribosomal RNA small subunit methyltransferase J.